A 274-amino-acid chain; its full sequence is Phosphate import ATP-binding protein PstB (274 aa).

One can recognise an ABC transporter domain in the interval 28 to 269; the sequence is VTVRDLNFYY…PNDRRTQDYI (242 aa). Residue 60 to 67 participates in ATP binding; it reads GPSGCGKS.

It belongs to the ABC transporter superfamily. Phosphate importer (TC 3.A.1.7) family. The complex is composed of two ATP-binding proteins (PstB), two transmembrane proteins (PstC and PstA) and a solute-binding protein (PstS).

Its subcellular location is the cell inner membrane. It catalyses the reaction phosphate(out) + ATP + H2O = ADP + 2 phosphate(in) + H(+). Its function is as follows. Part of the ABC transporter complex PstSACB involved in phosphate import. Responsible for energy coupling to the transport system. The polypeptide is Phosphate import ATP-binding protein PstB (Rhodopseudomonas palustris (strain HaA2)).